We begin with the raw amino-acid sequence, 429 residues long: Ribosomal RNA small subunit methyltransferase B (429 aa).

Residues 254–260, D277, D303, and D322 contribute to the S-adenosyl-L-methionine site; that span reads CAAPGGK. C375 functions as the Nucleophile in the catalytic mechanism.

Belongs to the class I-like SAM-binding methyltransferase superfamily. RsmB/NOP family.

It is found in the cytoplasm. It catalyses the reaction cytidine(967) in 16S rRNA + S-adenosyl-L-methionine = 5-methylcytidine(967) in 16S rRNA + S-adenosyl-L-homocysteine + H(+). In terms of biological role, specifically methylates the cytosine at position 967 (m5C967) of 16S rRNA. The chain is Ribosomal RNA small subunit methyltransferase B from Shigella flexneri serotype 5b (strain 8401).